A 282-amino-acid chain; its full sequence is Transcription factor MYB1 (282 aa).

2 consecutive HTH myb-type domains span residues 9–61 (KEGL…LNYL) and 62–116 (RPDI…SKKV). 2 consecutive DNA-binding regions (H-T-H motif) follow at residues 37–61 (WRDL…LNYL) and 89–112 (WSLI…NTYL). The interval 258 to 282 (EDDWKQNGGKDELMGGGNGGPSSVS) is disordered. Residues 260 to 270 (DWKQNGGKDEL) are compositionally biased toward basic and acidic residues. Gly residues predominate over residues 271 to 282 (MGGGNGGPSSVS).

It localises to the nucleus. In terms of biological role, transcription activator involved in the spatiotemporal regulation of flavonoid biosynthesis specifically in the corms of Montbretia. Activates the promoters of enzymes involved in the biosynthesis of the flavonol kaempferol and the flavonol-glycoside kaempferol-rhamnoside. This chain is Transcription factor MYB1, found in Crocosmia x crocosmiiflora (Montbretia).